The chain runs to 459 residues: Cysteine--tRNA ligase (459 aa).

Residue Cys28 participates in Zn(2+) binding. The 'HIGH' region signature appears at 30 to 40; it reads ITIYDLCHIGH. Residues Cys209, His234, and Glu238 each contribute to the Zn(2+) site. A 'KMSKS' region motif is present at residues 266 to 270; it reads KMSKS. Position 269 (Lys269) interacts with ATP.

Belongs to the class-I aminoacyl-tRNA synthetase family. As to quaternary structure, monomer. The cofactor is Zn(2+).

The protein localises to the cytoplasm. The catalysed reaction is tRNA(Cys) + L-cysteine + ATP = L-cysteinyl-tRNA(Cys) + AMP + diphosphate. The protein is Cysteine--tRNA ligase of Shewanella denitrificans (strain OS217 / ATCC BAA-1090 / DSM 15013).